A 352-amino-acid polypeptide reads, in one-letter code: B1 bradykinin receptor (352 aa).

Over 1–41 the chain is Extracellular; sequence MASWPPLELQSSNQSQLFPQNATACDNAPEAWDLLHRVLPT. N-linked (GlcNAc...) asparagine glycans are attached at residues N13 and N21. Residues 42–62 traverse the membrane as a helical segment; it reads FIISICSFGLLGNLFVLLVFL. The Cytoplasmic portion of the chain corresponds to 63 to 72; sequence LPRRRLNVAE. The helical transmembrane segment at 73-93 threads the bilayer; the sequence is IYLANLAASDLVFVLGLPFWA. Topologically, residues 94 to 110 are extracellular; that stretch reads ENIWNQFNWPFGALLCR. C109 and C188 are oxidised to a cystine. The helical transmembrane segment at 111 to 131 threads the bilayer; the sequence is GINGVIKANLFISIFLVVAIS. Topologically, residues 132 to 153 are cytoplasmic; the sequence is QDRYCLLVHPMASRRRQRRRQA. A helical membrane pass occupies residues 154 to 174; that stretch reads RVTCVLIWVVGGLLSIPTFLL. Residues 175–206 are Extracellular-facing; that stretch reads RSIQAVPDLNITACILLLPHEAWHFARIVELN. Residue N184 is glycosylated (N-linked (GlcNAc...) asparagine). A helical membrane pass occupies residues 207-227; sequence ILAFLLPLAAIVFFNYHILAS. At 228–250 the chain is on the cytoplasmic side; that stretch reads LRGREEVSRTRCGGRKDSKTTAL. The helical transmembrane segment at 251 to 271 threads the bilayer; that stretch reads ILTLVVAFLVCWAPYHFFAFL. The Extracellular portion of the chain corresponds to 272–294; sequence EFLFQVQAIRSCFWEDFIDLGLQ. A helical transmembrane segment spans residues 295-315; that stretch reads LANFLAFTNSSLNPVIYVFVG. Residues 316-352 are Cytoplasmic-facing; sequence RLFRTKVWELYKQCTPKSLAPISSSHRKEIFQLFWRN. The S-palmitoyl cysteine moiety is linked to residue C329.

It belongs to the G-protein coupled receptor 1 family. Bradykinin receptor subfamily. BDKRB1 sub-subfamily.

The protein resides in the cell membrane. Functionally, this is a receptor for bradykinin. Could be a factor in chronic pain and inflammation. The sequence is that of B1 bradykinin receptor (BDKRB1) from Chlorocebus pygerythrus (Vervet monkey).